The sequence spans 831 residues: MutS protein homolog 5 (831 aa).

Positions 1-43 (MAFRATPGRTPPGPGPGVPSASFSSPQPAMAAPGGIEEEDEEE) are disordered. ATP is bound at residue 589–596 (GPNSSGKS).

Belongs to the DNA mismatch repair MutS family. Heterooligomer of MSH4 and MSH5. Interacts with HJURP. Interacts with C7h12orf40/REDIC1.

Involved in DNA mismatch repair and meiotic recombination processes. Facilitates crossovers between homologs during meiosis. The protein is MutS protein homolog 5 (Msh5) of Rattus norvegicus (Rat).